Here is a 141-residue protein sequence, read N- to C-terminus: Large ribosomal subunit protein uL14 (141 aa).

It belongs to the universal ribosomal protein uL14 family.

The chain is Large ribosomal subunit protein uL14 (RPL23) from Tetrahymena thermophila (strain SB210).